The sequence spans 258 residues: Hydroxyacylglutathione hydrolase (258 aa).

Zn(2+) contacts are provided by His56, His58, Asp60, His61, His112, Asp132, and His170.

It belongs to the metallo-beta-lactamase superfamily. Glyoxalase II family. As to quaternary structure, monomer. Zn(2+) is required as a cofactor.

The enzyme catalyses an S-(2-hydroxyacyl)glutathione + H2O = a 2-hydroxy carboxylate + glutathione + H(+). The protein operates within secondary metabolite metabolism; methylglyoxal degradation; (R)-lactate from methylglyoxal: step 2/2. Thiolesterase that catalyzes the hydrolysis of S-D-lactoyl-glutathione to form glutathione and D-lactic acid. This Pseudomonas aeruginosa (strain ATCC 15692 / DSM 22644 / CIP 104116 / JCM 14847 / LMG 12228 / 1C / PRS 101 / PAO1) protein is Hydroxyacylglutathione hydrolase.